Consider the following 180-residue polypeptide: ATP-dependent protease subunit HslV (180 aa).

T7 is a catalytic residue. Na(+)-binding residues include A165, C168, and T171.

It belongs to the peptidase T1B family. HslV subfamily. In terms of assembly, a double ring-shaped homohexamer of HslV is capped on each side by a ring-shaped HslU homohexamer. The assembly of the HslU/HslV complex is dependent on binding of ATP.

It localises to the cytoplasm. The enzyme catalyses ATP-dependent cleavage of peptide bonds with broad specificity.. With respect to regulation, allosterically activated by HslU binding. Its function is as follows. Protease subunit of a proteasome-like degradation complex believed to be a general protein degrading machinery. The chain is ATP-dependent protease subunit HslV from Geobacillus kaustophilus (strain HTA426).